We begin with the raw amino-acid sequence, 371 residues long: tRNA-specific 2-thiouridylase MnmA (371 aa).

ATP is bound by residues 13 to 20 (GMSGGVDS) and Met-39. The tract at residues 99-101 (NPD) is interaction with target base in tRNA. Catalysis depends on Cys-104, which acts as the Nucleophile. Cys-104 and Cys-200 are disulfide-bonded. Gly-128 contacts ATP. The tract at residues 150–152 (KDQ) is interaction with tRNA. The Cysteine persulfide intermediate role is filled by Cys-200. The interaction with tRNA stretch occupies residues 308 to 309 (RY).

The protein belongs to the MnmA/TRMU family.

The protein localises to the cytoplasm. It catalyses the reaction S-sulfanyl-L-cysteinyl-[protein] + uridine(34) in tRNA + AH2 + ATP = 2-thiouridine(34) in tRNA + L-cysteinyl-[protein] + A + AMP + diphosphate + H(+). Catalyzes the 2-thiolation of uridine at the wobble position (U34) of tRNA, leading to the formation of s(2)U34. This Bacillus mycoides (strain KBAB4) (Bacillus weihenstephanensis) protein is tRNA-specific 2-thiouridylase MnmA.